A 198-amino-acid polypeptide reads, in one-letter code: Holliday junction resolvase RecU (198 aa).

The segment at 1 to 21 is disordered; that stretch reads MVNYPHKLSSQKRQPSLSQPK. Over residues 11–21 the composition is skewed to polar residues; sequence QKRQPSLSQPK. Mg(2+)-binding residues include Thr81, Asp83, Glu96, and Gln115.

This sequence belongs to the RecU family. The cofactor is Mg(2+).

It localises to the cytoplasm. The catalysed reaction is Endonucleolytic cleavage at a junction such as a reciprocal single-stranded crossover between two homologous DNA duplexes (Holliday junction).. Functionally, endonuclease that resolves Holliday junction intermediates in genetic recombination. Cleaves mobile four-strand junctions by introducing symmetrical nicks in paired strands. Promotes annealing of linear ssDNA with homologous dsDNA. Required for DNA repair, homologous recombination and chromosome segregation. The polypeptide is Holliday junction resolvase RecU (Streptococcus pneumoniae (strain Taiwan19F-14)).